We begin with the raw amino-acid sequence, 577 residues long: Arginine--tRNA ligase (577 aa).

A 'HIGH' region motif is present at residues 122 to 132; sequence PNVAKEMHVGH.

It belongs to the class-I aminoacyl-tRNA synthetase family. In terms of assembly, monomer.

The protein localises to the cytoplasm. It catalyses the reaction tRNA(Arg) + L-arginine + ATP = L-arginyl-tRNA(Arg) + AMP + diphosphate. The polypeptide is Arginine--tRNA ligase (Aliivibrio fischeri (strain MJ11) (Vibrio fischeri)).